The following is a 196-amino-acid chain: MTIKIRSEETCTESKFFYHNQDVTYNYHLDMVDNGINIWTSIHGKNAGLLPFVFQSFQISSEEDAISFYKYVKLIGTGCYVAILISGNLPYHSKRITKAMKLVGGGSKSIETLSDSNPNFCLIGYKGQKIGSARQAIGDADIEEEGGISVWMMTTKNRCLFKNRILINLRNKTPLGTISQLYKKHIKKEMTNNIYL.

Residues Tyr-71–Gly-87 form a helical membrane-spanning segment.

It is found in the membrane. This is an uncharacterized protein from Dictyostelium discoideum (Social amoeba).